Consider the following 140-residue polypeptide: Ribosome maturation factor RimP (140 aa).

Belongs to the RimP family.

Its subcellular location is the cytoplasm. In terms of biological role, required for maturation of 30S ribosomal subunits. The protein is Ribosome maturation factor RimP of Campylobacter jejuni subsp. doylei (strain ATCC BAA-1458 / RM4099 / 269.97).